The primary structure comprises 241 residues: Lactate utilization protein C (241 aa).

Belongs to the LutC/YkgG family.

In terms of biological role, is involved in L-lactate degradation and allows cells to grow with lactate as the sole carbon source. This is Lactate utilization protein C from Geobacillus sp. (strain WCH70).